The following is a 219-amino-acid chain: Ras-related protein Rab-3B (219 aa).

Alanine 2 bears the N-acetylalanine mark. Serine 31, serine 32, valine 33, glycine 34, lysine 35, threonine 36, serine 37, proline 49, and serine 53 together coordinate GTP. Serine 32 is a binding site for GDP. Residues glycine 34, lysine 35, threonine 36, and serine 37 each contribute to the GDP site. Threonine 36 lines the Mg(2+) pocket. The Switch 1 motif lies at 45 to 58 (DTFTPAFVSTVGID). Mg(2+)-binding residues include threonine 54 and aspartate 77. A Switch 2 motif is present at residues 78 to 96 (TAGQERYRTITTAYYRGAM). GTP is bound at residue glycine 80. Threonine 86 bears the Phosphothreonine; by LRRK2 mark. GTP-binding residues include asparagine 135, lysine 136, and aspartate 138. The GDP site is built by asparagine 135, lysine 136, aspartate 138, methionine 139, alanine 166, and lysine 167. GTP is bound by residues alanine 166 and lysine 167. Phosphoserine is present on residues serine 188 and serine 190. 2 S-geranylgeranyl cysteine lipidation sites follow: cysteine 217 and cysteine 219. Residue cysteine 219 is modified to Cysteine methyl ester.

This sequence belongs to the small GTPase superfamily. Rab family. In terms of assembly, interacts with RIMS1, RIMS2, RPH3A and RPH3AL. The GTP-bound form interacts with GAS8/DRC4 (via coiled-coil domains). The GTP-bound form interacts with REP15. Interacts with GDI2, CHM and CHML; phosphorylation at Thr-86 disrupts these interactions. Interacts with MADD (via uDENN domain); the GTP-bound form is preferred for interaction. Requires Mg(2+) as cofactor. Phosphorylation of Thr-86 in the switch II region by LRRK2 prevents the association of RAB regulatory proteins, including CHM, CHML and RAB GDP dissociation inhibitor GDI2.

It is found in the cell membrane. Its subcellular location is the golgi apparatus. It carries out the reaction GTP + H2O = GDP + phosphate + H(+). Regulated by guanine nucleotide exchange factors (GEFs) which promote the exchange of bound GDP for free GTP. Regulated by GTPase activating proteins (GAPs) which increase the GTP hydrolysis activity. Inhibited by GDP dissociation inhibitors (GDIs) which prevent Rab-GDP dissociation. Functionally, the small GTPases Rab are key regulators of intracellular membrane trafficking, from the formation of transport vesicles to their fusion with membranes. Rabs cycle between an inactive GDP-bound form and an active GTP-bound form that is able to recruit to membranes different sets of downstream effectors directly responsible for vesicle formation, movement, tethering and fusion. The chain is Ras-related protein Rab-3B from Homo sapiens (Human).